A 515-amino-acid polypeptide reads, in one-letter code: Protein DETOXIFICATION 32 (515 aa).

The span at 1–26 (METLNVDHEDTISSEQEHRAHTKSDT) shows a compositional bias: basic and acidic residues. Positions 1 to 30 (METLNVDHEDTISSEQEHRAHTKSDTDMPP) are disordered. A run of 12 helical transmembrane segments spans residues 48 to 68 (LWWL…LGAV), 90 to 110 (VISG…ATLC), 131 to 151 (IILN…TPLL), 167 to 187 (FSLW…TAKF), 194 to 214 (VIAM…LSWL), 225 to 245 (GGAV…IVYI), 276 to 296 (AVMV…AGYL), 303 to 323 (VAAL…AFGF), 347 to 367 (LIVA…TLIV), 392 to 412 (LLAL…VAVG), 418 to 438 (IVAY…GLVL), and 448 to 468 (GIWT…LFII). Over residues 488-497 (GDQSNKREEI) the composition is skewed to basic and acidic residues. A disordered region spans residues 488-515 (GDQSNKREEIDLCEEDENNSNGENNHRK). Low complexity predominate over residues 506–515 (NSNGENNHRK).

It belongs to the multi antimicrobial extrusion (MATE) (TC 2.A.66.1) family.

It localises to the membrane. In Arabidopsis thaliana (Mouse-ear cress), this protein is Protein DETOXIFICATION 32.